We begin with the raw amino-acid sequence, 413 residues long: ATP-dependent (S)-NAD(P)H-hydrate dehydratase (413 aa).

A YjeF C-terminal domain is found at 98 to 402 (NLNHFLSYVP…KSVPNALVWG (305 aa)). (6S)-NADPHX-binding positions include Gly-199 and 252 to 258 (NFVEYRA). ATP-binding positions include 292 to 296 (KGQED) and 311 to 320 (GMPRRCGGQG). Residue Asp-321 participates in (6S)-NADPHX binding.

Belongs to the NnrD/CARKD family. Mg(2+) serves as cofactor.

The catalysed reaction is (6S)-NADHX + ATP = ADP + phosphate + NADH + H(+). It carries out the reaction (6S)-NADPHX + ATP = ADP + phosphate + NADPH + H(+). In terms of biological role, catalyzes the dehydration of the S-form of NAD(P)HX at the expense of ATP, which is converted to ADP. Together with NAD(P)HX epimerase, which catalyzes the epimerization of the S- and R-forms, the enzyme allows the repair of both epimers of NAD(P)HX, a damaged form of NAD(P)H that is a result of enzymatic or heat-dependent hydration. The polypeptide is ATP-dependent (S)-NAD(P)H-hydrate dehydratase (Heterostelium pallidum (strain ATCC 26659 / Pp 5 / PN500) (Cellular slime mold)).